The chain runs to 170 residues: Small ribosomal subunit protein uS3mB (170 aa).

Residues 1–30 (MAAPVMSAFGRLQGLIRTERSLLTHVQSRC) constitute a mitochondrion transit peptide.

This sequence belongs to the universal ribosomal protein uS3 family. Component of the mitochondrial ribosome small subunit (28S) which comprises a 12S rRNA and about 30 distinct proteins.

The protein localises to the mitochondrion. This chain is Small ribosomal subunit protein uS3mB (mrps24-b), found in Xenopus laevis (African clawed frog).